Reading from the N-terminus, the 205-residue chain is MIGKLKGTIDEIGEDHVVLDVHGVGYVAHCSARTLGKLGSAGEAAVLFIETYVREDQLKLFGFLSALEREWFRLLQSVQGVGSKVALAVLSTLTPGELANAIALQDKTSISRAPGVGPKVAVRIVTELKNKAPAFSGEMAPSIGLKQELGEGVAAAPVADAVSALTNLGYSRDQAANAVAAALKNGGEGGDSAKLIRLGLKELSR.

The interval 1-64 is domain I; sequence MIGKLKGTID…EDQLKLFGFL (64 aa). Positions 65–143 are domain II; it reads SALEREWFRL…AFSGEMAPSI (79 aa). Positions 144 to 153 are flexible linker; the sequence is GLKQELGEGV. Positions 153 to 205 are domain III; that stretch reads VAAAPVADAVSALTNLGYSRDQAANAVAAALKNGGEGGDSAKLIRLGLKELSR.

Belongs to the RuvA family. In terms of assembly, homotetramer. Forms an RuvA(8)-RuvB(12)-Holliday junction (HJ) complex. HJ DNA is sandwiched between 2 RuvA tetramers; dsDNA enters through RuvA and exits via RuvB. An RuvB hexamer assembles on each DNA strand where it exits the tetramer. Each RuvB hexamer is contacted by two RuvA subunits (via domain III) on 2 adjacent RuvB subunits; this complex drives branch migration. In the full resolvosome a probable DNA-RuvA(4)-RuvB(12)-RuvC(2) complex forms which resolves the HJ.

It localises to the cytoplasm. Functionally, the RuvA-RuvB-RuvC complex processes Holliday junction (HJ) DNA during genetic recombination and DNA repair, while the RuvA-RuvB complex plays an important role in the rescue of blocked DNA replication forks via replication fork reversal (RFR). RuvA specifically binds to HJ cruciform DNA, conferring on it an open structure. The RuvB hexamer acts as an ATP-dependent pump, pulling dsDNA into and through the RuvAB complex. HJ branch migration allows RuvC to scan DNA until it finds its consensus sequence, where it cleaves and resolves the cruciform DNA. The protein is Holliday junction branch migration complex subunit RuvA of Rhizobium meliloti (strain 1021) (Ensifer meliloti).